Reading from the N-terminus, the 302-residue chain is Galactofuranosyltransferase GlfT1 (302 aa).

This sequence belongs to the glycosyltransferase 2 family.

Its subcellular location is the cell membrane. It is found in the secreted. The protein localises to the cell wall. It catalyses the reaction alpha-L-rhamnosyl-(1-&gt;3)-N-acetyl-alpha-D-glucosaminyl-diphospho-trans,octa-cis-decaprenol + 2 UDP-alpha-D-galactofuranose = beta-D-galactofuranosyl-(1-&gt;5)-beta-D-galactofuranosyl-(1-&gt;4)-alpha-L-rhamnosyl-(1-&gt;3)-N-acetyl-alpha-D-glucosaminyl-diphospho-trans,octa-cis-decaprenol + 2 UDP + 2 H(+). It participates in cell wall biogenesis; cell wall polysaccharide biosynthesis. Functionally, involved in the biosynthesis of the arabinogalactan (AG) region of the mycolylarabinogalactan-peptidoglycan (mAGP) complex, an essential component of the mycobacterial cell wall. Catalyzes the transfer of the first two galactofuranosyl (Galf) units from UDP-galactofuranose (UDP-Galf) onto the rhamnosyl-GlcNAc-diphospho-decaprenol (Rha-GlcNAc-PP-C50) acceptor, yielding galactofuranosyl-galactofuranosyl-rhamnosyl-GlcNAc-diphospho-decaprenol (Galf-Galf-Rha-GlcNAc-PP-C50). Thus, GlfT1 is the initiator of galactan synthesis, while GlfT2 continues with the subsequent polymerization events. This chain is Galactofuranosyltransferase GlfT1, found in Mycolicibacterium smegmatis (strain ATCC 700084 / mc(2)155) (Mycobacterium smegmatis).